A 330-amino-acid chain; its full sequence is Phosphate acyltransferase (330 aa).

This sequence belongs to the PlsX family. In terms of assembly, homodimer. Probably interacts with PlsY.

Its subcellular location is the cytoplasm. It carries out the reaction a fatty acyl-[ACP] + phosphate = an acyl phosphate + holo-[ACP]. Its pathway is lipid metabolism; phospholipid metabolism. Its function is as follows. Catalyzes the reversible formation of acyl-phosphate (acyl-PO(4)) from acyl-[acyl-carrier-protein] (acyl-ACP). This enzyme utilizes acyl-ACP as fatty acyl donor, but not acyl-CoA. The sequence is that of Phosphate acyltransferase from Bacillus anthracis (strain A0248).